The primary structure comprises 248 residues: 2,3-bisphosphoglycerate-dependent phosphoglycerate mutase (248 aa).

Substrate is bound by residues 8–15 (RHGESLWN), 21–22 (TG), R60, 87–90 (EKHY), K98, 114–115 (RR), and 183–184 (GN). The active-site Tele-phosphohistidine intermediate is H9. The active-site Proton donor/acceptor is E87.

This sequence belongs to the phosphoglycerate mutase family. BPG-dependent PGAM subfamily.

The catalysed reaction is (2R)-2-phosphoglycerate = (2R)-3-phosphoglycerate. The protein operates within carbohydrate degradation; glycolysis; pyruvate from D-glyceraldehyde 3-phosphate: step 3/5. Functionally, catalyzes the interconversion of 2-phosphoglycerate and 3-phosphoglycerate. This is 2,3-bisphosphoglycerate-dependent phosphoglycerate mutase from Porphyromonas gingivalis (strain ATCC 33277 / DSM 20709 / CIP 103683 / JCM 12257 / NCTC 11834 / 2561).